The sequence spans 339 residues: Glyceraldehyde-3-phosphate dehydrogenase (339 aa).

Residues 13 to 14 (RI), Asp-35, and Lys-84 each bind NAD(+). D-glyceraldehyde 3-phosphate is bound by residues 156–158 (SCT), Thr-187, 216–217 (TG), and Arg-239. Cys-157 serves as the catalytic Nucleophile. Asn-321 contacts NAD(+).

Belongs to the glyceraldehyde-3-phosphate dehydrogenase family. In terms of assembly, homotetramer.

The protein resides in the cytoplasm. It carries out the reaction D-glyceraldehyde 3-phosphate + phosphate + NAD(+) = (2R)-3-phospho-glyceroyl phosphate + NADH + H(+). Its pathway is carbohydrate degradation; glycolysis; pyruvate from D-glyceraldehyde 3-phosphate: step 1/5. This Onchocerca volvulus protein is Glyceraldehyde-3-phosphate dehydrogenase.